Here is a 463-residue protein sequence, read N- to C-terminus: ATP-dependent protease ATPase subunit HslU (463 aa).

ATP-binding positions include I19 and 61–66 (GVGKTE). Residues 154–174 (FGGAQNSSQTSDTQEDGEIEK) are disordered. Residues D277, E341, and R413 each contribute to the ATP site.

The protein belongs to the ClpX chaperone family. HslU subfamily. As to quaternary structure, a double ring-shaped homohexamer of HslV is capped on each side by a ring-shaped HslU homohexamer. The assembly of the HslU/HslV complex is dependent on binding of ATP.

The protein localises to the cytoplasm. Its function is as follows. ATPase subunit of a proteasome-like degradation complex; this subunit has chaperone activity. The binding of ATP and its subsequent hydrolysis by HslU are essential for unfolding of protein substrates subsequently hydrolyzed by HslV. HslU recognizes the N-terminal part of its protein substrates and unfolds these before they are guided to HslV for hydrolysis. The protein is ATP-dependent protease ATPase subunit HslU of Bacillus cereus (strain G9842).